The chain runs to 163 residues: MSGLIQAAKSLLLLEFVDAFFLAMRQFFSPKPTINYPYEKGFVSHRFRGEHALRRYPNGEERCIACKLCEAICPAQAITIEAGPRRNDGTRRTVRYDIDMVKCIYCGFCQEACPVEAIVEGPNFEFATEMREELYYDKEKLLLNGDRWEREIARNILMDAPYR.

4Fe-4S ferredoxin-type domains lie at 53–83 (LRRY…IEAG) and 94–123 (VRYD…EGPN). Residues cysteine 63, cysteine 66, cysteine 69, cysteine 73, cysteine 103, cysteine 106, cysteine 109, and cysteine 113 each contribute to the [4Fe-4S] cluster site.

It belongs to the complex I 23 kDa subunit family. As to quaternary structure, NDH-1 is composed of 14 different subunits. Subunits NuoA, H, J, K, L, M, N constitute the membrane sector of the complex. [4Fe-4S] cluster serves as cofactor.

The protein localises to the cell inner membrane. The catalysed reaction is a quinone + NADH + 5 H(+)(in) = a quinol + NAD(+) + 4 H(+)(out). Its function is as follows. NDH-1 shuttles electrons from NADH, via FMN and iron-sulfur (Fe-S) centers, to quinones in the respiratory chain. The immediate electron acceptor for the enzyme in this species is believed to be ubiquinone. Couples the redox reaction to proton translocation (for every two electrons transferred, four hydrogen ions are translocated across the cytoplasmic membrane), and thus conserves the redox energy in a proton gradient. The protein is NADH-quinone oxidoreductase subunit I of Bartonella bacilliformis (strain ATCC 35685 / KC583 / Herrer 020/F12,63).